A 312-amino-acid polypeptide reads, in one-letter code: DNA-directed RNA polymerase subunit alpha (312 aa).

The segment at 1-226 (MIEFKKPNIT…EHFKAFESAD (226 aa)) is alpha N-terminal domain (alpha-NTD). An alpha C-terminal domain (alpha-CTD) region spans residues 243–312 (KEKKLEMTIE…DLGLSLRQED (70 aa)).

This sequence belongs to the RNA polymerase alpha chain family. In terms of assembly, homodimer. The RNAP catalytic core consists of 2 alpha, 1 beta, 1 beta' and 1 omega subunit. When a sigma factor is associated with the core the holoenzyme is formed, which can initiate transcription.

The enzyme catalyses RNA(n) + a ribonucleoside 5'-triphosphate = RNA(n+1) + diphosphate. Functionally, DNA-dependent RNA polymerase catalyzes the transcription of DNA into RNA using the four ribonucleoside triphosphates as substrates. This chain is DNA-directed RNA polymerase subunit alpha, found in Lactobacillus delbrueckii subsp. bulgaricus (strain ATCC 11842 / DSM 20081 / BCRC 10696 / JCM 1002 / NBRC 13953 / NCIMB 11778 / NCTC 12712 / WDCM 00102 / Lb 14).